The following is a 99-amino-acid chain: Large ribosomal subunit protein uL23 (99 aa).

It belongs to the universal ribosomal protein uL23 family. As to quaternary structure, part of the 50S ribosomal subunit. Contacts protein L29, and trigger factor when it is bound to the ribosome.

Functionally, one of the early assembly proteins it binds 23S rRNA. One of the proteins that surrounds the polypeptide exit tunnel on the outside of the ribosome. Forms the main docking site for trigger factor binding to the ribosome. This chain is Large ribosomal subunit protein uL23, found in Shewanella woodyi (strain ATCC 51908 / MS32).